Consider the following 469-residue polypeptide: Ribulose bisphosphate carboxylase large chain (469 aa).

At Lys-5 the chain carries N6,N6,N6-trimethyllysine. 2 residues coordinate substrate: Asn-114 and Thr-164. Residue Lys-166 is the Proton acceptor of the active site. Lys-168 is a binding site for substrate. Mg(2+) is bound by residues Lys-192, Asp-194, and Glu-195. Residue Lys-192 is modified to N6-carboxylysine. The active-site Proton acceptor is His-285. Arg-286, His-318, and Ser-370 together coordinate substrate.

Belongs to the RuBisCO large chain family. Type I subfamily. In terms of assembly, heterohexadecamer of 8 large chains and 8 small chains; disulfide-linked. The disulfide link is formed within the large subunit homodimers. Requires Mg(2+) as cofactor. Post-translationally, the disulfide bond which can form in the large chain dimeric partners within the hexadecamer appears to be associated with oxidative stress and protein turnover.

The protein resides in the plastid. It is found in the chloroplast. The catalysed reaction is 2 (2R)-3-phosphoglycerate + 2 H(+) = D-ribulose 1,5-bisphosphate + CO2 + H2O. It catalyses the reaction D-ribulose 1,5-bisphosphate + O2 = 2-phosphoglycolate + (2R)-3-phosphoglycerate + 2 H(+). RuBisCO catalyzes two reactions: the carboxylation of D-ribulose 1,5-bisphosphate, the primary event in carbon dioxide fixation, as well as the oxidative fragmentation of the pentose substrate in the photorespiration process. Both reactions occur simultaneously and in competition at the same active site. This Nicandra physalodes (Apple-of-Peru) protein is Ribulose bisphosphate carboxylase large chain.